A 411-amino-acid chain; its full sequence is Potassium channel subfamily K member 3 (411 aa).

The Cytoplasmic portion of the chain corresponds to 1–8 (MKRQNVRT). A helical transmembrane segment spans residues 9-29 (LALIVCTFTYLLVGAAVFDAL). Residue Asn53 is glycosylated (N-linked (GlcNAc...) asparagine). The segment at residues 78-101 (WRFAGSFYFAITVITTIGYGHAAP) is an intramembrane region (pore-forming). Residues 108-128 (VFCMFYALLGIPLTLVMFQSL) form a helical membrane-spanning segment. Over 129–158 (GERINTFVRYLLHRAKRGLGMRHAEVSMAN) the chain is Cytoplasmic. Residues 159–179 (MVLIGFVSCISTLCIGAAAFS) traverse the membrane as a helical segment. An intramembrane region (pore-forming) is located at residues 184–207 (WTFFQAYYYCFITLTTIGFGDYVA). A helical membrane pass occupies residues 223–243 (FSFVYILTGLTVIGAFLNLVV). Residues 244–411 (LRFMTMNAED…RGLMKRRSSV (168 aa)) are Cytoplasmic-facing.

The protein belongs to the two pore domain potassium channel (TC 1.A.1.8) family. In terms of assembly, homodimer. Heterodimer with KCNK1. Heterodimer with KCNK9. As to expression, strongest expression in heart. Moderate expression in lung and brain. Low levels in liver, kidney and skeletal muscle. Expressed in cerebellar granule cells (at protein level).

Its subcellular location is the cell membrane. It carries out the reaction K(+)(in) = K(+)(out). It catalyses the reaction Na(+)(in) = Na(+)(out). Inhibited by extracellular acidification, muscarinic signaling, divalent metal cations Zn(2+) and Ba(2+), isoflurane, bupivacaine and phenytoin. Activated by protein kinase A. Ruthenium red resistant. Its function is as follows. K(+) channel that conducts voltage-dependent outward rectifying currents upon membrane depolarization. Voltage sensing is coupled to K(+) electrochemical gradient in an 'ion flux gating' mode where outward but not inward ion flow opens the gate. Changes ion selectivity and becomes permeable to Na(+) ions in response to extracellular acidification. Protonation of the pH sensor His-98 stabilizes C-type inactivation conformation likely converting the channel from outward K(+)-conducting, to inward Na(+)-conducting to nonconductive state. Homo- and heterodimerizes to form functional channels with distinct regulatory and gating properties. Allows K(+) currents with fast-gating kinetics important for the repolarization and hyperpolarization phases of action potentials. In cerebellar granule cells, heteromeric KCNK3:KCNK9 channel may hyperpolarize the resting membrane potential to limit intrinsic neuronal excitability, but once the action potential threshold is reached, it may support high-frequency action potential firing and increased neuronal excitability. Dispensable for central chemosensory respiration i.e. breathing controlled by brainstem CO2/pH, it rather conducts pH-sensitive currents and controls the firing rate of serotonergic raphe neurons involved in potentiation of the respiratory chemoreflex. Additionally, imparts chemosensitivity to type 1 cells in carotid bodies which respond to a decrease in arterial oxygen pressure or an increase in carbon dioxide pressure or pH to initiate adaptive changes in pulmonary ventilation. In adrenal gland, contributes to the maintenance of a hyperpolarized resting membrane potential of aldosterone-producing cells at zona glomerulosa and limits aldosterone release as part of a regulatory mechanism that controls arterial blood pressure and electrolyte homeostasis. In brown adipocytes, mediates K(+) efflux that counteracts norepinephrine-induced membrane depolarization, limits Ca(2+) efflux and downstream cAMP and PKA signaling, ultimately attenuating lipid oxidation and adaptive thermogenesis. The protein is Potassium channel subfamily K member 3 of Rattus norvegicus (Rat).